A 488-amino-acid chain; its full sequence is Probable glycine dehydrogenase (decarboxylating) subunit 2 (488 aa).

Residue K274 is modified to N6-(pyridoxal phosphate)lysine.

This sequence belongs to the GcvP family. C-terminal subunit subfamily. The glycine cleavage system is composed of four proteins: P, T, L and H. In this organism, the P 'protein' is a heterodimer of two subunits. Pyridoxal 5'-phosphate serves as cofactor.

It catalyses the reaction N(6)-[(R)-lipoyl]-L-lysyl-[glycine-cleavage complex H protein] + glycine + H(+) = N(6)-[(R)-S(8)-aminomethyldihydrolipoyl]-L-lysyl-[glycine-cleavage complex H protein] + CO2. Functionally, the glycine cleavage system catalyzes the degradation of glycine. The P protein binds the alpha-amino group of glycine through its pyridoxal phosphate cofactor; CO(2) is released and the remaining methylamine moiety is then transferred to the lipoamide cofactor of the H protein. The protein is Probable glycine dehydrogenase (decarboxylating) subunit 2 of Listeria innocua serovar 6a (strain ATCC BAA-680 / CLIP 11262).